We begin with the raw amino-acid sequence, 429 residues long: Adenylosuccinate synthetase (429 aa).

GTP contacts are provided by residues 12-18 (GDEGKGK) and 40-42 (GHT). The Proton acceptor role is filled by D13. D13 and G40 together coordinate Mg(2+). Residues 13-16 (DEGK), 38-41 (NAGH), T129, R143, Q223, T238, and R302 contribute to the IMP site. The active-site Proton donor is H41. 298–304 (VVTGRKR) is a binding site for substrate. GTP is bound by residues R304, 330–332 (KLD), and 412–414 (STS).

This sequence belongs to the adenylosuccinate synthetase family. As to quaternary structure, homodimer. Mg(2+) is required as a cofactor.

The protein resides in the cytoplasm. It catalyses the reaction IMP + L-aspartate + GTP = N(6)-(1,2-dicarboxyethyl)-AMP + GDP + phosphate + 2 H(+). Its pathway is purine metabolism; AMP biosynthesis via de novo pathway; AMP from IMP: step 1/2. Functionally, plays an important role in the de novo pathway of purine nucleotide biosynthesis. Catalyzes the first committed step in the biosynthesis of AMP from IMP. The sequence is that of Adenylosuccinate synthetase from Bartonella tribocorum (strain CIP 105476 / IBS 506).